A 438-amino-acid polypeptide reads, in one-letter code: Xylose isomerase (438 aa).

Active-site residues include His-100 and Asp-103. Residues Glu-231, Glu-267, His-270, Asp-295, Asp-306, Asp-308, and Asp-338 each coordinate Mg(2+).

This sequence belongs to the xylose isomerase family. As to quaternary structure, homotetramer. The cofactor is Mg(2+).

The protein localises to the cytoplasm. It carries out the reaction alpha-D-xylose = alpha-D-xylulofuranose. This is Xylose isomerase from Pseudomonas fluorescens (strain Pf0-1).